A 284-amino-acid polypeptide reads, in one-letter code: Phosphonates import ATP-binding protein PhnC 2 (284 aa).

Positions 24–264 (IRIDGISVRR…LEARIFPSLA (241 aa)) constitute an ABC transporter domain. 56-63 (GPSGVGKT) serves as a coordination point for ATP.

This sequence belongs to the ABC transporter superfamily. Phosphonates importer (TC 3.A.1.9.1) family. In terms of assembly, the complex is composed of two ATP-binding proteins (PhnC), two transmembrane proteins (PhnE) and a solute-binding protein (PhnD).

The protein resides in the cell inner membrane. The enzyme catalyses phosphonate(out) + ATP + H2O = phosphonate(in) + ADP + phosphate + H(+). Functionally, part of the ABC transporter complex PhnCDE involved in phosphonates import. Responsible for energy coupling to the transport system. The polypeptide is Phosphonates import ATP-binding protein PhnC 2 (Rhodopseudomonas palustris (strain ATCC BAA-98 / CGA009)).